Reading from the N-terminus, the 357-residue chain is Probable dual-specificity RNA methyltransferase RlmN (357 aa).

Glu-92 acts as the Proton acceptor in catalysis. The region spanning 98-336 is the Radical SAM core domain; it reads HKYGLSVCVT…CGVRLEHGTD (239 aa). The cysteines at positions 105 and 341 are disulfide-linked. [4Fe-4S] cluster contacts are provided by Cys-112, Cys-116, and Cys-119. S-adenosyl-L-methionine is bound by residues 164 to 165, Ser-196, 219 to 221, and Asn-297; these read GE and SLH. Cys-341 serves as the catalytic S-methylcysteine intermediate.

Belongs to the radical SAM superfamily. RlmN family. [4Fe-4S] cluster serves as cofactor.

The protein resides in the cytoplasm. The catalysed reaction is adenosine(2503) in 23S rRNA + 2 reduced [2Fe-2S]-[ferredoxin] + 2 S-adenosyl-L-methionine = 2-methyladenosine(2503) in 23S rRNA + 5'-deoxyadenosine + L-methionine + 2 oxidized [2Fe-2S]-[ferredoxin] + S-adenosyl-L-homocysteine. It carries out the reaction adenosine(37) in tRNA + 2 reduced [2Fe-2S]-[ferredoxin] + 2 S-adenosyl-L-methionine = 2-methyladenosine(37) in tRNA + 5'-deoxyadenosine + L-methionine + 2 oxidized [2Fe-2S]-[ferredoxin] + S-adenosyl-L-homocysteine. In terms of biological role, specifically methylates position 2 of adenine 2503 in 23S rRNA and position 2 of adenine 37 in tRNAs. The sequence is that of Probable dual-specificity RNA methyltransferase RlmN from Exiguobacterium sibiricum (strain DSM 17290 / CCUG 55495 / CIP 109462 / JCM 13490 / 255-15).